A 1008-amino-acid chain; its full sequence is ATP-dependent DNA/RNA helicase DHX36 (1008 aa).

Residues 1-51 (MSYDYHQNWGRDGGPRSSGGGYGGGPAGGHGGNRGSGGGGGGGGGGRGGRG) form a required for recruitment to cytoplasmic stress granules region. A disordered region spans residues 1-58 (MSYDYHQNWGRDGGPRSSGGGYGGGPAGGHGGNRGSGGGGGGGGGGRGGRGRHPGHLK). The interval 1-104 (MSYDYHQNWG…IVQLLNSVQA (104 aa)) is required for the pre-miR-134 transport. The tract at residues 1-200 (MSYDYHQNWG…KKNDLRYIEM (200 aa)) is necessary for nuclear and nucleolar caps localizations. The span at 16–48 (RSSGGGYGGGPAGGHGGNRGSGGGGGGGGGGRG) shows a compositional bias: gly residues. The tract at residues 53-75 (HPGHLKGREIGMWYAKKQGQKNK) is DSM (DHX36-specific motif). The tract at residues 53 to 105 (HPGHLKGREIGMWYAKKQGQKNKEAERQERAVVHMDERREEQIVQLLNSVQAK) is required for G4-DNA- and G4-RNA-binding. Residues 72–157 (QKNKEAERQE…INQEKKMFRI (86 aa)) adopt a coiled-coil conformation. RecA-like domain regions lie at residues 106–386 (NDKE…MIHI) and 387–628 (PGFT…DYQL). Ser161 carries the post-translational modification Phosphoserine. Residues 217-387 (VNLIDNHQVT…FGNCPMIHIP (171 aa)) enclose the Helicase ATP-binding domain. 233–238 (GCGKTT) lines the ATP pocket. The segment at 265–317 (RRISAISVAERVAAERAESCGSGNSTGYQIRLQSRLPRKQGSILYCTTGIILQ) is necessary for interaction with single-stranded DNA at the 3'-end of the G4-DNA structure. A DEAH box motif is present at residues 334–337 (DEIH). Residues Glu335 and His337 each coordinate Mg(2+). One can recognise a Helicase C-terminal domain in the interval 477 to 647 (ALIRYIVLEE…ELCLQIKILR (171 aa)). The tract at residues 498 to 557 (WDNISTLHDLLMSQVMFKSDKFLIIPLHSLMPTVNQTQVFKRTPPGVRKIVIATNIAETS) is necessary for interaction with single-stranded DNA at the 3'-end of the G4-DNA structure. The Nuclear localization signal motif lies at 517 to 528 (DKFLIIPLHSLM). Residues Ser557 and 602 to 605 (RAGR) contribute to the ATP site. The tract at residues 629 to 698 (PEILRTPLEE…LGVHLARLPV (70 aa)) is WH domain. 3 necessary for interaction with single-stranded DNA at the 3'-end of the G4-DNA structure regions span residues 638 to 697 (ELCL…ARLP), 849 to 860 (NLGKKRKMVKVY), and 870 to 900 (HPKS…IYLY). The tract at residues 841–905 (PKVAKIRLNL…SIYLYDCTEV (65 aa)) is OB-fold-like subdomains. At Lys947 the chain carries N6-acetyllysine. Ser963 carries the phosphoserine modification.

This sequence belongs to the DEAD box helicase family. DEAH subfamily. Found in a multi-helicase-TICAM1 complex at least composed of DHX36, DDX1, DDX21 and TICAM1; this complex exists in resting cells with or without dsRNA poly(I:C) ligand stimulation. Interacts (via C-terminus) with TICAM1 (via TIR domain). Interacts (via C-terminus) with DDX21; this interaction serves as bridges to TICAM1. Interacts with TERT; this interaction is dependent on the ability of DHX36 to bind to the G-quadruplex RNA (G4-RNA) structure present in the telomerase RNA template component (TERC). Interacts with DKC1; this interaction is dependent on the ability of DHX36 to bind to the G4-RNA structure present in TERC. Interacts with PARN; this interaction stimulates PARN to enhance uPA mRNA decay. Interacts with EXOSC3; this interaction occurs in a RNase-insensitive manner. Interacts with EXOSC10; this interaction occurs in a RNase-insensitive manner. Interacts with ILF3; this interaction occurs in a RNA-dependent manner. Interacts with ELAVL1; this interaction occurs in an RNA-dependent manner. Interacts with DDX5; this interaction occurs in a RNA-dependent manner. Interacts with DDX17; this interaction occurs in a RNA-dependent manner. Interacts with HDAC1; this interaction occurs in a RNA-dependent manner. Interacts with HDAC3; this interaction occurs in a RNA-dependent manner. Interacts with HDAC4. Interacts with AGO1. Interacts with AGO2. Interacts with ERCC6. Mg(2+) serves as cofactor. Highly expressed in testis.

The protein localises to the nucleus. It localises to the cytoplasm. Its subcellular location is the cytosol. It is found in the stress granule. The protein resides in the nucleus speckle. The protein localises to the chromosome. It localises to the telomere. Its subcellular location is the mitochondrion. It is found in the perikaryon. The protein resides in the cell projection. The protein localises to the dendrite. It localises to the axon. It carries out the reaction ATP + H2O = ADP + phosphate + H(+). ATPase activity is enhanced in the presence of homomeric poly(U) RNAs, but not by double-stranded DNA (dsDNA), double-stranded RNA (dsRNA) and tRNA. Its function is as follows. Multifunctional ATP-dependent helicase that unwinds G-quadruplex (G4) structures. Plays a role in many biological processes such as genomic integrity, gene expression regulations and as a sensor to initiate antiviral responses. G4 structures correspond to helical structures containing guanine tetrads. Binds with high affinity to and unwinds G4 structures that are formed in nucleic acids (G4-DNA and G4-RNA). Plays a role in genomic integrity. Converts the G4-RNA structure present in telomerase RNA template component (TREC) into a double-stranded RNA to promote P1 helix formation that acts as a template boundary ensuring accurate reverse transcription. Plays a role in transcriptional regulation. Resolves G4-DNA structures in promoters of genes, such as YY1, KIT/c-kit and ALPL and positively regulates their expression. Plays a role in post-transcriptional regulation. Unwinds a G4-RNA structure located in the 3'-UTR polyadenylation site of the pre-mRNA TP53 and stimulates TP53 pre-mRNA 3'-end processing in response to ultraviolet (UV)-induced DNA damage. Binds to the precursor-microRNA-134 (pre-miR-134) terminal loop and regulates its transport into the synapto-dendritic compartment. Involved in the pre-miR-134-dependent inhibition of target gene expression and the control of dendritic spine size. Plays a role in the regulation of cytoplasmic mRNA translation and mRNA stability. Binds to both G4-RNA structures and alternative non-quadruplex-forming sequence within the 3'-UTR of the PITX1 mRNA regulating negatively PITX1 protein expression. Binds to both G4-RNA structure in the 5'-UTR and AU-rich elements (AREs) localized in the 3'-UTR of NKX2-5 mRNA to either stimulate protein translation or induce mRNA decay in an ELAVL1-dependent manner, respectively. Also binds to ARE sequences present in several mRNAs mediating exosome-mediated 3'-5' mRNA degradation. Involved in cytoplasmic urokinase-type plasminogen activator (uPA) mRNA decay. Component of a multi-helicase-TICAM1 complex that acts as a cytoplasmic sensor of viral double-stranded RNA (dsRNA) and plays a role in the activation of a cascade of antiviral responses including the induction of pro-inflammatory cytokines via the adapter molecule TICAM1. Required for early embryonic development and hematopoiesis. Involved in the regulation of cardioblast differentiation and proliferation during heart development. Involved in spermatogonia differentiation. May play a role in ossification. This chain is ATP-dependent DNA/RNA helicase DHX36, found in Homo sapiens (Human).